The following is a 327-amino-acid chain: MSQYVVCALYKFVELNHYQELRAPLLALMEENHIRGTLLLAQEGINGTVASSRQGIDALLAWLENEPSLKGTVYKESSASEPPFNRTKVKLKKEIVTMGVEGIDPRHVVGTYVKPQDWNALISDPEVLVVDTRNDYEVQLGTFKNALNPKTETFREFPHYVQENLDPQKHKKVAMFCTGGIRCEKSTAYLKEQGFEEVYHLEGGILKYLEEVPQEQSLWEGDCYVFDGRVAVGHGLAESDYQICNACRLPITEEDKQSEQYEQGVSCPRCFGTHSEEQLERFREREKQVQLAKLRGESHIGEESAALIEKRRAEKLARKAAQRGQKG.

The Rhodanese domain maps to S123–S217. The active-site Cysteine persulfide intermediate is the C177.

Belongs to the TrhO family.

The catalysed reaction is uridine(34) in tRNA + AH2 + O2 = 5-hydroxyuridine(34) in tRNA + A + H2O. Its function is as follows. Catalyzes oxygen-dependent 5-hydroxyuridine (ho5U) modification at position 34 in tRNAs. The polypeptide is tRNA uridine(34) hydroxylase (Vibrio cholerae serotype O1 (strain ATCC 39315 / El Tor Inaba N16961)).